A 789-amino-acid chain; its full sequence is Cadherin-10 (789 aa).

The signal sequence occupies residues 1–22 (MTIQQVLLLLLLWMWLLHPCRT). Residues 23–54 (EMLFRRTPDLRPKGFVGRTSGSDGKALHRQKR) constitute a propeptide that is removed on maturation. 5 consecutive Cadherin domains span residues 55 to 160 (GWMW…EPTF), 161 to 269 (PEEI…PPRF), 270 to 384 (PQST…PPVF), 385 to 487 (SRSS…DNAP), and 488 to 606 (QFAV…LLLP). Residues 55–606 (GWMWNQFFLL…SCNAEALLLP (552 aa)) lie on the Extracellular side of the membrane. Asn256 carries an N-linked (GlcNAc...) asparagine glycan. 3 N-linked (GlcNAc...) asparagine glycosylation sites follow: Asn438, Asn456, and Asn534. The helical transmembrane segment at 607-634 (AGLSTGALIAILLCIIILLVIVVLFAAL) threads the bilayer. The Cytoplasmic portion of the chain corresponds to 635 to 789 (KRQRKKEPLI…GGGESDKDAS (155 aa)).

The protein localises to the cell membrane. Its function is as follows. Cadherins are calcium-dependent cell adhesion proteins. They preferentially interact with themselves in a homophilic manner in connecting cells; cadherins may thus contribute to the sorting of heterogeneous cell types. This chain is Cadherin-10 (CDH10), found in Gallus gallus (Chicken).